The primary structure comprises 597 residues: Probable HECT-type ubiquitin ligase-interacting protein creD (597 aa).

2 disordered regions span residues 375–398 (ELDP…GTLS) and 432–499 (LNIT…MATP). Residues 443-455 (TDHESQNDSEHRR) show a composition bias toward basic and acidic residues. Residues 465 to 481 (PSSGSNSHSPSSPVLSR) are compositionally biased toward low complexity. Residues 482–492 (RPSDEVDHEHV) are compositionally biased toward basic and acidic residues.

Belongs to the arrestin family. Interacts with hulA.

Component of the regulatory network controlling carbon source utilization through ubiquitination and deubiquitination involving creA, creB, creC, creD and acrB. May be involved in signaling by recognizing appropriately phosphorylated substrates via its arrestin domains and then recruit a HECT-type ubiquitin ligase such as hulA, leading to ubiquitination of the substrate, providing a link between ubiquitination and phosphorylation in protein regulation and stability. The polypeptide is Probable HECT-type ubiquitin ligase-interacting protein creD (creD) (Aspergillus oryzae (strain ATCC 42149 / RIB 40) (Yellow koji mold)).